Reading from the N-terminus, the 431-residue chain is UDP-N-acetylglucosamine 1-carboxyvinyltransferase (431 aa).

Residue 22–23 coordinates phosphoenolpyruvate; the sequence is KN. UDP-N-acetyl-alpha-D-glucosamine is bound at residue R102. The Proton donor role is filled by C126. C126 is subject to 2-(S-cysteinyl)pyruvic acid O-phosphothioketal. D318 and I340 together coordinate UDP-N-acetyl-alpha-D-glucosamine.

This sequence belongs to the EPSP synthase family. MurA subfamily.

Its subcellular location is the cytoplasm. It catalyses the reaction phosphoenolpyruvate + UDP-N-acetyl-alpha-D-glucosamine = UDP-N-acetyl-3-O-(1-carboxyvinyl)-alpha-D-glucosamine + phosphate. It participates in cell wall biogenesis; peptidoglycan biosynthesis. In terms of biological role, cell wall formation. Adds enolpyruvyl to UDP-N-acetylglucosamine. The chain is UDP-N-acetylglucosamine 1-carboxyvinyltransferase from Bartonella tribocorum (strain CIP 105476 / IBS 506).